The primary structure comprises 89 residues: Teretoxin Tan6.8 (89 aa).

An N-terminal signal peptide occupies residues 1-21 (MRLLLILLLLTPVILAGSLDE). Residues 22-42 (EPNNADGANAASFTADQEGRH) form a disordered region. A propeptide spanning residues 22 to 44 (EPNNADGANAASFTADQEGRHKR) is cleaved from the precursor.

Contains 3 disulfide bonds. As to expression, expressed by the venom duct.

It localises to the secreted. The sequence is that of Teretoxin Tan6.8 from Terebra anilis (Auger snail).